We begin with the raw amino-acid sequence, 452 residues long: Cobyrinate a,c-diamide synthase (452 aa).

A GATase cobBQ-type domain is found at 248 to 441 (RVAYALDAAF…LHIHFYQNLA (194 aa)). Cysteine 330 serves as the catalytic Nucleophile.

Belongs to the CobB/CbiA family. Mg(2+) is required as a cofactor.

The catalysed reaction is cob(II)yrinate + 2 L-glutamine + 2 ATP + 2 H2O = cob(II)yrinate a,c diamide + 2 L-glutamate + 2 ADP + 2 phosphate + 2 H(+). The protein operates within cofactor biosynthesis; adenosylcobalamin biosynthesis; cob(II)yrinate a,c-diamide from sirohydrochlorin (anaerobic route): step 10/10. Its function is as follows. Catalyzes the ATP-dependent amidation of the two carboxylate groups at positions a and c of cobyrinate, using either L-glutamine or ammonia as the nitrogen source. The polypeptide is Cobyrinate a,c-diamide synthase (Listeria monocytogenes serovar 1/2a (strain ATCC BAA-679 / EGD-e)).